The primary structure comprises 160 residues: UPF0479 membrane protein YLL066W-A (160 aa).

Helical transmembrane passes span 39 to 59 (IVFCLPFFPALFLVPVQKVLQ) and 136 to 156 (VPMIWLDVFQVFFVFLVISQH).

The protein belongs to the UPF0479 family.

The protein localises to the membrane. The sequence is that of UPF0479 membrane protein YLL066W-A from Saccharomyces cerevisiae (strain ATCC 204508 / S288c) (Baker's yeast).